We begin with the raw amino-acid sequence, 164 residues long: FMN reductase (NADH) RutF (164 aa).

This sequence belongs to the non-flavoprotein flavin reductase family. RutF subfamily.

It catalyses the reaction FMNH2 + NAD(+) = FMN + NADH + 2 H(+). In terms of biological role, catalyzes the reduction of FMN to FMNH2 which is used to reduce pyrimidine by RutA via the Rut pathway. This Enterobacter cloacae subsp. cloacae (strain ATCC 13047 / DSM 30054 / NBRC 13535 / NCTC 10005 / WDCM 00083 / NCDC 279-56) protein is FMN reductase (NADH) RutF.